The following is a 256-amino-acid chain: Ras-related protein Rab-26 (256 aa).

The segment at 1-53 is disordered; that stretch reads MSRKKTPKSKAGSAPATSALPAANGPRPVRPGTARPGPEAPPNGPPQPGRSSV. Pro residues predominate over residues 38 to 48; the sequence is PEAPPNGPPQP. Positions 72, 73, 74, 75, 76, 77, 78, 95, and 96 each coordinate GTP. T77 contacts Mg(2+). Short sequence motifs (switch) lie at residues 86-101 and 119-136; these read GAFL…GIDF and DTAG…YYRD. Mg(2+) contacts are provided by T96 and D119. Residues G122, N177, K178, D180, A208, and K209 each contribute to the GTP site. S-geranylgeranyl cysteine attachment occurs at residues C253 and C254.

It belongs to the small GTPase superfamily. Rab family. Mg(2+) serves as cofactor.

It localises to the cell membrane. The enzyme catalyses GTP + H2O = GDP + phosphate + H(+). Regulated by guanine nucleotide exchange factors (GEFs) which promote the exchange of bound GDP for free GTP. Regulated by GTPase activating proteins (GAPs) which increase the GTP hydrolysis activity. Inhibited by GDP dissociation inhibitors (GDIs). Its function is as follows. The small GTPases Rab are key regulators of intracellular membrane trafficking, from the formation of transport vesicles to their fusion with membranes. Rabs cycle between an inactive GDP-bound form and an active GTP-bound form that is able to recruit to membranes different set of downstream effectors directly responsible for vesicle formation, movement, tethering and fusion. RAB26 mediates transport of ADRA2A and ADRA2B from the Golgi to the cell membrane. Plays a role in the maturation of zymogenic granules and in pepsinogen secretion in the stomach. Plays a role in the secretion of amylase from acinar granules in the parotid gland. In Bos taurus (Bovine), this protein is Ras-related protein Rab-26 (RAB26).